We begin with the raw amino-acid sequence, 95 residues long: Putative pterin-4-alpha-carbinolamine dehydratase (95 aa).

This sequence belongs to the pterin-4-alpha-carbinolamine dehydratase family.

It catalyses the reaction (4aS,6R)-4a-hydroxy-L-erythro-5,6,7,8-tetrahydrobiopterin = (6R)-L-erythro-6,7-dihydrobiopterin + H2O. This is Putative pterin-4-alpha-carbinolamine dehydratase from Prochlorococcus marinus (strain NATL2A).